Here is a 342-residue protein sequence, read N- to C-terminus: Vancomycin B-type resistance protein VanB (342 aa).

Residues lysine 132, 168–170 (FVK), 176–177 (SS), 206–213 (EQAISGCE), and phenylalanine 240 contribute to the ATP site. The ATP-grasp domain maps to 136 to 337 (YILTKNAGIA…LPALIDSLIT (202 aa)). Histidine 243 provides a ligand contact to substrate. 303–304 (NE) serves as a coordination point for ATP. Mg(2+)-binding residues include glutamate 304 and asparagine 306.

It belongs to the D-alanine--D-alanine ligase family. The cofactor is Mg(2+). It depends on Mn(2+) as a cofactor.

It is found in the cell membrane. It catalyses the reaction (R)-lactate + D-alanine + ATP = D-alanyl-(R)-lactate + ADP + phosphate. Its function is as follows. Required for high-level resistance to glycopeptides antibiotics. D-Ala--D-Ala ligase of altered specificity which catalyzes ester bond formation between D-Ala and various D-hydroxy acids; producing a peptidoglycan which does not terminate in D-alanine but in D-lactate, thus preventing vancomycin binding. This Enterococcus faecalis (strain ATCC 700802 / V583) protein is Vancomycin B-type resistance protein VanB (vanB).